The primary structure comprises 209 residues: Octanoyltransferase (209 aa).

A BPL/LPL catalytic domain is found at 30-209 (DHEPEIIYLV…IQTEFNKIFK (180 aa)). Substrate-binding positions include 69-76 (RGGKFTFH), 143-145 (AIG), and 156-158 (GVA). Catalysis depends on Cys174, which acts as the Acyl-thioester intermediate.

This sequence belongs to the LipB family.

The protein localises to the cytoplasm. It carries out the reaction octanoyl-[ACP] + L-lysyl-[protein] = N(6)-octanoyl-L-lysyl-[protein] + holo-[ACP] + H(+). It participates in protein modification; protein lipoylation via endogenous pathway; protein N(6)-(lipoyl)lysine from octanoyl-[acyl-carrier-protein]: step 1/2. In terms of biological role, catalyzes the transfer of endogenously produced octanoic acid from octanoyl-acyl-carrier-protein onto the lipoyl domains of lipoate-dependent enzymes. Lipoyl-ACP can also act as a substrate although octanoyl-ACP is likely to be the physiological substrate. In Rickettsia africae (strain ESF-5), this protein is Octanoyltransferase.